The sequence spans 286 residues: Fructose-bisphosphate aldolase (286 aa).

S50 contacts D-glyceraldehyde 3-phosphate. D85 (proton donor) is an active-site residue. Zn(2+) is bound by residues H86, D107, E137, and H181. Residue G182 coordinates dihydroxyacetone phosphate. Position 209 (H209) interacts with Zn(2+). Dihydroxyacetone phosphate contacts are provided by residues 210–212 (GGT) and 231–234 (NVNT).

Belongs to the class II fructose-bisphosphate aldolase family. Zn(2+) is required as a cofactor.

The catalysed reaction is beta-D-fructose 1,6-bisphosphate = D-glyceraldehyde 3-phosphate + dihydroxyacetone phosphate. It participates in carbohydrate degradation; glycolysis; D-glyceraldehyde 3-phosphate and glycerone phosphate from D-glucose: step 4/4. Functionally, catalyzes the aldol condensation of dihydroxyacetone phosphate (DHAP or glycerone-phosphate) with glyceraldehyde 3-phosphate (G3P) to form fructose 1,6-bisphosphate (FBP) in gluconeogenesis and the reverse reaction in glycolysis. The chain is Fructose-bisphosphate aldolase (fba) from Staphylococcus aureus (strain MSSA476).